The chain runs to 197 residues: FMN-dependent NADH:quinone oxidoreductase (197 aa).

Residues serine 10 and 16–18 (SIS) contribute to the FMN site.

Belongs to the azoreductase type 1 family. As to quaternary structure, homodimer. It depends on FMN as a cofactor.

The catalysed reaction is 2 a quinone + NADH + H(+) = 2 a 1,4-benzosemiquinone + NAD(+). It catalyses the reaction N,N-dimethyl-1,4-phenylenediamine + anthranilate + 2 NAD(+) = 2-(4-dimethylaminophenyl)diazenylbenzoate + 2 NADH + 2 H(+). Quinone reductase that provides resistance to thiol-specific stress caused by electrophilic quinones. In terms of biological role, also exhibits azoreductase activity. Catalyzes the reductive cleavage of the azo bond in aromatic azo compounds to the corresponding amines. This is FMN-dependent NADH:quinone oxidoreductase from Erythrobacter litoralis (strain HTCC2594).